The sequence spans 548 residues: SH2/SH3 adapter protein dreadlocks (548 aa).

Disordered stretches follow at residues 12 to 37, 57 to 92, and 113 to 146; these read IPDSSASSQQYPQQQQHPPQLPQHQN, QVPVPVPGSPAHHQRHSSLSQQQQLHHHRTLSTASS, and GSGSANGSGSGNSSSGSAAGNAGTQSMAGNMKHG. Residues 20-37 are compositionally biased toward low complexity; it reads QQYPQQQQHPPQLPQHQN. Residues 113-122 are compositionally biased toward gly residues; sequence GSGSANGSGS. Residues 123–135 show a composition bias toward low complexity; the sequence is GNSSSGSAAGNAG. The SH3 1 domain maps to 150 to 209; the sequence is DDVCYVVAKYDYAAQGAQELDLRKNERYLLLDDSKHWWRVQNSRNQSGYVPSNYVKKEKP. The interval 219–247 is disordered; it reads VKKGSGSKTLPNCSPSRQVESPTMSRRLP. Residues 227-242 show a composition bias toward polar residues; it reads TLPNCSPSRQVESPTM. SH3 domains follow at residues 252-311 and 324-386; these read EAIG…EDCD and NVLD…ELND. Residues 398–442 form a disordered region; sequence SAGNGNGGGSNGGAGGGGGNDSMERRNEGNKPAAQSSGQPIERPN. Positions 401 to 417 are enriched in gly residues; that stretch reads NGNGGGSNGGAGGGGGN. The 95-residue stretch at 448-542 folds into the SH2 domain; it reads WYYGAITRSQ…GEKLYLVRSL (95 aa).

Interacts (via SH2 and SH3 domains) with Dscam1 (via cytoplasmic domain); the interaction is direct and requires Dscam1 to be phosphorylated. Interacts (via SH2 and SH3 domains) with InR/Insulin-like receptor (via C-terminal cytoplasmic region); the interaction requires InR kinase activity, probably for autophosphorylation stimulated by insulin signaling. Interacts with Ptp61F (via C-terminus); this interaction is independent of insulin stimulation. Interacts (via SH3 domain 2) with Pak (via N-terminal PXXP motif). Post-translationally, phosphorylated by Src42A and possibly by other tyrosine kinases. Constitutively dephosphorylated by its binding partner Ptp61F.

Its subcellular location is the perikaryon. The protein localises to the cell projection. The protein resides in the axon. It localises to the growth cone. In terms of biological role, adapter protein that links cell surface receptor tyrosine phosphorylation to downstream signaling pathways and effectors, many of which are involved in regulation of the actin cytoskeleton. Recruited by Dscam1/Down syndrome cell adhesion molecule homolog and InR/insulin-like receptor. Recruits Pak to membranes, probably when dock/dreadlocks is associated with activated receptors. Required for guidance and targeting of photoreceptor (R cell) axon projections but not for axon outgrowth, differentiation or target induction in the developing eye. As part of a signaling pathway that involves the lbm/late bloomer protein, involved in synapse formation of the RP3 motorneuron at the muscle 7/6 cleft, probably by stimulating axon defasciculation from other SNb neurons. This Drosophila melanogaster (Fruit fly) protein is SH2/SH3 adapter protein dreadlocks.